The chain runs to 65 residues: Large ribosomal subunit protein uL29 (65 aa).

Residues 30–49 (ERSSVAMGGAPSSPGKMRSI) are disordered.

Belongs to the universal ribosomal protein uL29 family.

This chain is Large ribosomal subunit protein uL29, found in Picrophilus torridus (strain ATCC 700027 / DSM 9790 / JCM 10055 / NBRC 100828 / KAW 2/3).